A 132-amino-acid polypeptide reads, in one-letter code: Small ribosomal subunit protein uS8 (132 aa).

The protein belongs to the universal ribosomal protein uS8 family. In terms of assembly, part of the 30S ribosomal subunit. Contacts proteins S5 and S12.

Functionally, one of the primary rRNA binding proteins, it binds directly to 16S rRNA central domain where it helps coordinate assembly of the platform of the 30S subunit. In Clostridium botulinum (strain Alaska E43 / Type E3), this protein is Small ribosomal subunit protein uS8.